The primary structure comprises 457 residues: MALWGGRFTQAADQRFKQFNDSLRFDYRLAEQDIVGSVAWSKALVTVGVLTAEEQVQLEEALNVLLEDVRARPQQILESDAEDIHSWVEGKLIDKVGQLGKKLHTGRSRNDQVATDLKLWCKDTVSELLTANRQLQSALVETAENNQDAVMPGYTHLQRAQPVTFAHWCLAYVEMLARDESRLQDALKRLDVSPLGCGALAGTAYEIDREQLAGWLGFASATRNSLDSVSDRDHVLELLSAAAIGMVHLSRFAEDLIFFNTGEAGFVELSDRVTSGSSLMPQKKNPDALELIRGKCGRVQGALTGMMMTLKGLPLAYNKDMQEDKEGLFDALDTWLDCLHMAALVLDGIQVKRPRCQEAAQQGYANATELADYLVAKGVPFREAHHIVGEAVVEAIRQGKPLEELPLSELQKFSQVIGEDVYPILSLQSCLDKRAAKGGVSPQQVAQAIAFAQARLG.

Belongs to the lyase 1 family. Argininosuccinate lyase subfamily.

Its subcellular location is the cytoplasm. It carries out the reaction 2-(N(omega)-L-arginino)succinate = fumarate + L-arginine. It participates in amino-acid biosynthesis; L-arginine biosynthesis; L-arginine from L-ornithine and carbamoyl phosphate: step 3/3. The protein is Argininosuccinate lyase of Escherichia fergusonii (strain ATCC 35469 / DSM 13698 / CCUG 18766 / IAM 14443 / JCM 21226 / LMG 7866 / NBRC 102419 / NCTC 12128 / CDC 0568-73).